The sequence spans 898 residues: Histone-lysine N-methyltransferase mes-4 (898 aa).

A disordered region spans residues 1–68; the sequence is MLPSSGDSSK…APILTNAPKD (68 aa). Residues 36–51 show a composition bias toward polar residues; it reads QRNATPQGAGSETSSN. 2 consecutive PHD-type zinc fingers follow at residues 126 to 214 and 303 to 355; these read DSKC…CNLD and IKAC…CVCG. Residues 537–665 enclose the SET domain; sequence EKIKLAATLC…DGDEITFSYN (129 aa). In terms of domain architecture, Post-SET spans 671-687; that stretch reads NLPDCECGAENCMGTMG. Positions 689–847 are disordered; sequence AKREKPEVAD…SLQTIQETGK (159 aa). The span at 692–704 shows a compositional bias: basic and acidic residues; sequence EKPEVADSSEKAA. Positions 705–719 are enriched in basic residues; sequence KKNKSSKKKSVKNQN. 2 stretches are compositionally biased toward low complexity: residues 737–751 and 761–773; these read ISPS…SSTS and SQNK…NSNQ. Positions 774-788 are enriched in polar residues; it reads PVADTGSTLSTSTEL. Low complexity predominate over residues 802–811; it reads SSRSRAASSS.

Belongs to the class V-like SAM-binding methyltransferase superfamily. Histone-lysine methyltransferase family. SET2 subfamily. In adults, it is predominantly expressed in the germline, and weakly expressed in intestinal cells.

The protein localises to the nucleus. Its subcellular location is the chromosome. It carries out the reaction L-lysyl(36)-[histone H3] + 2 S-adenosyl-L-methionine = N(6),N(6)-dimethyl-L-lysyl(36)-[histone H3] + 2 S-adenosyl-L-homocysteine + 2 H(+). Histone methyltransferase. Dimethylates 'Lys-36' of histone H3, a specific tag for epigenetic transcriptional activation. Plays a central role in early development and is responsible for all H3 'Lys-36' dimethylation until about the 40-cell stage. Indirectly involved in the global inactivation of the X chromosomes in germline cells, possibly by excluding the mes-2-mes-3-mes-6 repressive Polycomb complex from the autosomes. Not related to transcription elongation. Required for small-RNA-induced H3K27 trimethylation. May suppress sensitivity to RNAi. May regulate the expression of genes required for vulval development. This is Histone-lysine N-methyltransferase mes-4 from Caenorhabditis elegans.